Here is a 398-residue protein sequence, read N- to C-terminus: Acetyl-CoA acetyltransferase (398 aa).

Serine 2 carries the N-acetylserine modification. Cysteine 91 serves as the catalytic Acyl-thioester intermediate. Residues tyrosine 186 and lysine 231 each contribute to the CoA site. Tyrosine 186 provides a ligand contact to K(+). Positions 248, 249, and 251 each coordinate K(+). CoA is bound at residue serine 252. Valine 350 is a binding site for K(+). Residues histidine 354 and cysteine 384 each act as proton acceptor in the active site.

This sequence belongs to the thiolase-like superfamily. Thiolase family. Homotetramer.

Its subcellular location is the cytoplasm. The protein resides in the cytosol. It carries out the reaction 2 acetyl-CoA = acetoacetyl-CoA + CoA. It participates in metabolic intermediate biosynthesis; (R)-mevalonate biosynthesis; (R)-mevalonate from acetyl-CoA: step 1/3. Its function is as follows. Acetyl-CoA acetyltransferase; part of the first module of ergosterol biosynthesis pathway that includes the early steps of the pathway, conserved across all eukaryotes, and which results in the formation of mevalonate from acetyl-coenzyme A (acetyl-CoA). ERG10 catalyzes the formation of acetoacetyl-CoA from acetyl-CoA. The first module starts with the action of the cytosolic acetyl-CoA acetyltransferase ERG10 that catalyzes the formation of acetoacetyl-CoA. The hydroxymethylglutaryl-CoA synthase ERG13 then condenses acetyl-CoA with acetoacetyl-CoA to form HMG-CoA. The rate-limiting step of the early module is the reduction to mevalonate by the 3-hydroxy-3-methylglutaryl-coenzyme A (HMG-CoA) reductases HMG1 and HMG2 which are derived from a single ancestral HMGR gene by gene duplication. The sequence is that of Acetyl-CoA acetyltransferase from Saccharomyces cerevisiae (strain ATCC 204508 / S288c) (Baker's yeast).